The primary structure comprises 240 residues: Glutathione S-transferase theta-1 (240 aa).

The 81-residue stretch at G2–D82 folds into the GST N-terminal domain. Glutathione contacts are provided by residues H40, K53–V54, and E66–S67. The 133-residue stretch at D88–F220 folds into the GST C-terminal domain.

The protein belongs to the GST superfamily. Theta family. Homodimer. As to expression, found in erythrocyte. Expressed at low levels in liver. In lung, expressed at low levels in club cells and ciliated cells at the alveolar/bronchiolar junction. Absent from epithelial cells of larger bronchioles.

The protein localises to the cytoplasm. It carries out the reaction RX + glutathione = an S-substituted glutathione + a halide anion + H(+). Conjugation of reduced glutathione to a wide number of exogenous and endogenous hydrophobic electrophiles. Acts on 1,2-epoxy-3-(4-nitrophenoxy)propane, phenethylisothiocyanate 4-nitrobenzyl chloride and 4-nitrophenethyl bromide. Displays glutathione peroxidase activity with cumene hydroperoxide. The sequence is that of Glutathione S-transferase theta-1 (GSTT1) from Homo sapiens (Human).